We begin with the raw amino-acid sequence, 377 residues long: Nitric oxide reductase FlRd-NAD(+) reductase (377 aa).

Belongs to the FAD-dependent oxidoreductase family. The cofactor is FAD.

The protein localises to the cytoplasm. The enzyme catalyses 2 reduced [nitric oxide reductase rubredoxin domain] + NAD(+) + H(+) = 2 oxidized [nitric oxide reductase rubredoxin domain] + NADH. Its pathway is nitrogen metabolism; nitric oxide reduction. Its function is as follows. One of at least two accessory proteins for anaerobic nitric oxide (NO) reductase. Reduces the rubredoxin moiety of NO reductase. The polypeptide is Nitric oxide reductase FlRd-NAD(+) reductase (Enterobacter sp. (strain 638)).